Here is a 214-residue protein sequence, read N- to C-terminus: Holliday junction branch migration complex subunit RuvA (214 aa).

The segment at 1-63 is domain I; the sequence is MISSLRGTVL…EDSLTLFGFP (63 aa). The interval 64–139 is domain II; the sequence is GPDELRAFEL…KLFVTQPRTR (76 aa). The interval 139–143 is flexible linker; that stretch reads RSASS. The segment at 144–214 is domain III; that stretch reads AASTVTADVV…APAAAQAADR (71 aa).

Belongs to the RuvA family. As to quaternary structure, homotetramer. Forms an RuvA(8)-RuvB(12)-Holliday junction (HJ) complex. HJ DNA is sandwiched between 2 RuvA tetramers; dsDNA enters through RuvA and exits via RuvB. An RuvB hexamer assembles on each DNA strand where it exits the tetramer. Each RuvB hexamer is contacted by two RuvA subunits (via domain III) on 2 adjacent RuvB subunits; this complex drives branch migration. In the full resolvosome a probable DNA-RuvA(4)-RuvB(12)-RuvC(2) complex forms which resolves the HJ.

Its subcellular location is the cytoplasm. Functionally, the RuvA-RuvB-RuvC complex processes Holliday junction (HJ) DNA during genetic recombination and DNA repair, while the RuvA-RuvB complex plays an important role in the rescue of blocked DNA replication forks via replication fork reversal (RFR). RuvA specifically binds to HJ cruciform DNA, conferring on it an open structure. The RuvB hexamer acts as an ATP-dependent pump, pulling dsDNA into and through the RuvAB complex. HJ branch migration allows RuvC to scan DNA until it finds its consensus sequence, where it cleaves and resolves the cruciform DNA. This chain is Holliday junction branch migration complex subunit RuvA, found in Clavibacter sepedonicus (Clavibacter michiganensis subsp. sepedonicus).